The following is a 305-amino-acid chain: Coiled-coil domain-containing protein 50 (305 aa).

An N-acetylalanine modification is found at A2. Phosphoserine is present on S5. A coiled-coil region spans residues 86–130 (EIAQEIQEKLTIEAERRRIQEKKDEDIARLLQEKELQEEKRRKKH). Disordered stretches follow at residues 122–142 (QEEKRRKKHTPEFSGGSVFGD) and 218–305 (KKAK…HNKQ). 2 stretches are compositionally biased toward basic and acidic residues: residues 218–239 (KKAKEREKSSLDKRKHDPECKL) and 247–263 (KSKEGDEAHRSKIDRPS). The span at 279–305 (THFTNQHSTTWHLPKSESSQKGFHNKQ) shows a compositional bias: polar residues.

In terms of assembly, interacts with RNF126. Post-translationally, phosphorylated on tyrosine residues. In terms of tissue distribution, widely expressed.

It localises to the cytoplasm. In terms of biological role, involved in EGFR signaling. This chain is Coiled-coil domain-containing protein 50 (Ccdc50), found in Mus musculus (Mouse).